A 188-amino-acid polypeptide reads, in one-letter code: Probable nicotinate-nucleotide adenylyltransferase (188 aa).

Belongs to the NadD family.

It carries out the reaction nicotinate beta-D-ribonucleotide + ATP + H(+) = deamido-NAD(+) + diphosphate. It functions in the pathway cofactor biosynthesis; NAD(+) biosynthesis; deamido-NAD(+) from nicotinate D-ribonucleotide: step 1/1. Catalyzes the reversible adenylation of nicotinate mononucleotide (NaMN) to nicotinic acid adenine dinucleotide (NaAD). The polypeptide is Probable nicotinate-nucleotide adenylyltransferase (Rhizobium meliloti (strain 1021) (Ensifer meliloti)).